The sequence spans 372 residues: Cytochrome b (372 aa).

4 helical membrane-spanning segments follow: residues 25–45 (FGSM…FLAI), 69–90 (WIMQ…YIHI), 105–125 (WLSG…GYVL), and 170–190 (FFAL…IHIM). Heme b contacts are provided by H75 and H89. 2 residues coordinate heme b: H174 and H188. H193 serves as a coordination point for a ubiquinone. Transmembrane regions (helical) follow at residues 218–238 (HKDI…MTLT), 280–300 (LGGT…PFTH), 312–332 (LTQL…WAAT), and 339–358 (FTMI…IMNP).

This sequence belongs to the cytochrome b family. In terms of assembly, the cytochrome bc1 complex contains 3 respiratory subunits (MT-CYB, CYC1 and UQCRFS1), 2 core proteins (UQCRC1 and UQCRC2) and probably 6 low-molecular weight proteins. Requires heme b as cofactor.

It localises to the mitochondrion inner membrane. Functionally, component of the ubiquinol-cytochrome c reductase complex (complex III or cytochrome b-c1 complex) that is part of the mitochondrial respiratory chain. The b-c1 complex mediates electron transfer from ubiquinol to cytochrome c. Contributes to the generation of a proton gradient across the mitochondrial membrane that is then used for ATP synthesis. The sequence is that of Cytochrome b (MT-CYB) from Lycodon semicarinatus (Ryukyu odd-tooth snake).